Consider the following 479-residue polypeptide: Poly(A) polymerase catalytic subunit (479 aa).

Residues Asp202 and Asp204 contribute to the active site. 3 residues coordinate Ca(2+): Asp202, Asp204, and Asp253.

The protein belongs to the poxviridae poly(A) polymerase catalytic subunit family. In terms of assembly, heterodimer of a large (catalytic) subunit and a small (regulatory) subunit.

It carries out the reaction RNA(n) + ATP = RNA(n)-3'-adenine ribonucleotide + diphosphate. Its function is as follows. Polymerase that creates the 3'-poly(A) tail of mRNA's. The chain is Poly(A) polymerase catalytic subunit (OPG063) from Homo sapiens (Human).